Reading from the N-terminus, the 321-residue chain is Torsin-2A (321 aa).

The first 26 residues, 1–26 (MAAATRSCRPWGSLLGLIWLVSAAAA), serve as a signal peptide directing secretion. 93–100 (GWTGTGKS) serves as a coordination point for ATP. Asparagine 149 is a glycosylation site (N-linked (GlcNAc...) asparagine).

Belongs to the ClpA/ClpB family. Torsin subfamily. In terms of assembly, homohexamer. Interacts with TOR1AIP1.

Its subcellular location is the endoplasmic reticulum lumen. This is Torsin-2A (TOR2A) from Bos taurus (Bovine).